The primary structure comprises 746 residues: Polyribonucleotide nucleotidyltransferase (746 aa).

Mg(2+) is bound by residues Asp490 and Asp496. Residues Pro557–Ile619 enclose the KH domain. The S1 motif domain maps to Gly629–Lys699. The disordered stretch occupies residues Leu701 to Asp746. The span at Glu706 to Asp746 shows a compositional bias: basic and acidic residues.

It belongs to the polyribonucleotide nucleotidyltransferase family. It depends on Mg(2+) as a cofactor.

It is found in the cytoplasm. It carries out the reaction RNA(n+1) + phosphate = RNA(n) + a ribonucleoside 5'-diphosphate. Involved in mRNA degradation. Catalyzes the phosphorolysis of single-stranded polyribonucleotides processively in the 3'- to 5'-direction. This chain is Polyribonucleotide nucleotidyltransferase, found in Parabacteroides distasonis (strain ATCC 8503 / DSM 20701 / CIP 104284 / JCM 5825 / NCTC 11152).